We begin with the raw amino-acid sequence, 86 residues long: Curamycin polyketide synthase acyl carrier protein (86 aa).

The Carrier domain maps to 7–86 (QVTVEELATL…VVNGALASGA (80 aa)). Position 44 is an O-(pantetheine 4'-phosphoryl)serine (Ser-44).

Post-translationally, 4'-phosphopantetheine is transferred from CoA to a specific serine of the apo-ACP-like protein.

It functions in the pathway antibiotic biosynthesis; curamycin biosynthesis. Functionally, acyl carrier protein. The sequence is that of Curamycin polyketide synthase acyl carrier protein (curE) from Streptomyces cyaneus (Streptomyces curacoi).